The primary structure comprises 142 residues: Relaxin-3 (142 aa).

The N-terminal stretch at 1–25 is a signal peptide; that stretch reads MARYMLLLLLAVWVLTGELWPGAEA. 3 disulfide bridges follow: cysteine 35–cysteine 129, cysteine 47–cysteine 142, and cysteine 128–cysteine 133. The propeptide at 55–118 is connecting peptide; sequence SDILAHEAMG…GTPGVLRGSR (64 aa).

It belongs to the insulin family. As to quaternary structure, heterodimer of a B chain and an A chain linked by two disulfide bonds.

The protein resides in the secreted. May play a role in neuropeptide signaling processes. Ligand for LGR7, RXFP3 and RXFP4. The sequence is that of Relaxin-3 (RLN3) from Homo sapiens (Human).